Consider the following 422-residue polypeptide: Serine--tRNA ligase (422 aa).

229–231 (TAE) is an L-serine binding site. 260-262 (RAE) lines the ATP pocket. Glutamate 283 contacts L-serine. ATP is bound at residue 347–350 (EISS). Serine 383 lines the L-serine pocket.

It belongs to the class-II aminoacyl-tRNA synthetase family. Type-1 seryl-tRNA synthetase subfamily. As to quaternary structure, homodimer. The tRNA molecule binds across the dimer.

It is found in the cytoplasm. It carries out the reaction tRNA(Ser) + L-serine + ATP = L-seryl-tRNA(Ser) + AMP + diphosphate + H(+). The catalysed reaction is tRNA(Sec) + L-serine + ATP = L-seryl-tRNA(Sec) + AMP + diphosphate + H(+). Its pathway is aminoacyl-tRNA biosynthesis; selenocysteinyl-tRNA(Sec) biosynthesis; L-seryl-tRNA(Sec) from L-serine and tRNA(Sec): step 1/1. In terms of biological role, catalyzes the attachment of serine to tRNA(Ser). Is also able to aminoacylate tRNA(Sec) with serine, to form the misacylated tRNA L-seryl-tRNA(Sec), which will be further converted into selenocysteinyl-tRNA(Sec). This is Serine--tRNA ligase from Heliobacterium modesticaldum (strain ATCC 51547 / Ice1).